Consider the following 430-residue polypeptide: Ribosomal protein uS12 methylthiotransferase RimO (430 aa).

The MTTase N-terminal domain maps to 1–116 (MKIGIKVLGC…IAEAIEKATP (116 aa)). Residues Cys-10, Cys-46, Cys-79, Cys-146, Cys-150, and Cys-153 each contribute to the [4Fe-4S] cluster site. The 231-residue stretch at 132 to 362 (SCNNSFAYVK…LIFQSQIAYE (231 aa)) folds into the Radical SAM core domain. A TRAM domain is found at 365–430 (KRFVGKNLNV…DEYDLKGELI (66 aa)).

This sequence belongs to the methylthiotransferase family. RimO subfamily. It depends on [4Fe-4S] cluster as a cofactor.

It localises to the cytoplasm. The enzyme catalyses L-aspartate(89)-[ribosomal protein uS12]-hydrogen + (sulfur carrier)-SH + AH2 + 2 S-adenosyl-L-methionine = 3-methylsulfanyl-L-aspartate(89)-[ribosomal protein uS12]-hydrogen + (sulfur carrier)-H + 5'-deoxyadenosine + L-methionine + A + S-adenosyl-L-homocysteine + 2 H(+). Its function is as follows. Catalyzes the methylthiolation of an aspartic acid residue of ribosomal protein uS12. This Pseudothermotoga lettingae (strain ATCC BAA-301 / DSM 14385 / NBRC 107922 / TMO) (Thermotoga lettingae) protein is Ribosomal protein uS12 methylthiotransferase RimO.